The primary structure comprises 55 residues: Large ribosomal subunit protein bL33 (55 aa).

Belongs to the bacterial ribosomal protein bL33 family.

The sequence is that of Large ribosomal subunit protein bL33 from Pectobacterium carotovorum subsp. carotovorum (strain PC1).